Reading from the N-terminus, the 196-residue chain is Adenylate kinase (196 aa).

9 to 17 (GIPGVGKST) lines the ATP pocket.

This sequence belongs to the archaeal adenylate kinase family.

It is found in the cytoplasm. The catalysed reaction is AMP + ATP = 2 ADP. In Pyrococcus abyssi (strain GE5 / Orsay), this protein is Adenylate kinase (adkA).